The sequence spans 62 residues: Insect toxin BsIT4 (62 aa).

The region spanning 1 to 62 (DGYIKGNKGC…WLYAATNTCG (62 aa)) is the LCN-type CS-alpha/beta domain. 4 disulfides stabilise this stretch: Cys-10–Cys-61, Cys-14–Cys-35, Cys-21–Cys-42, and Cys-25–Cys-44.

The protein belongs to the long (4 C-C) scorpion toxin superfamily. Sodium channel inhibitor family. Beta subfamily. Expressed by the venom gland.

Its subcellular location is the secreted. In terms of biological role, depressant insect beta-toxins cause a transient contraction paralysis followed by a slow flaccid paralysis. They bind voltage-independently at site-4 of sodium channels (Nav) and shift the voltage of activation toward more negative potentials thereby affecting sodium channel activation and promoting spontaneous and repetitive firing. This toxin is active only on insects. The polypeptide is Insect toxin BsIT4 (Hottentotta tamulus sindicus (Scorpion)).